A 174-amino-acid chain; its full sequence is 3-hydroxyanthranilate 3,4-dioxygenase (174 aa).

O2 is bound at residue arginine 47. Positions 51, 57, and 95 each coordinate Fe cation. Glutamate 57 lines the substrate pocket. The substrate site is built by arginine 99 and glutamate 110. The Fe cation site is built by cysteine 125, cysteine 128, cysteine 162, and cysteine 165.

It belongs to the 3-HAO family. In terms of assembly, homodimer. Fe(2+) serves as cofactor.

The catalysed reaction is 3-hydroxyanthranilate + O2 = (2Z,4Z)-2-amino-3-carboxymuconate 6-semialdehyde. It functions in the pathway cofactor biosynthesis; NAD(+) biosynthesis; quinolinate from L-kynurenine: step 3/3. Inhibited by 4-chloro-3-hydroxyanthranilate. Mechanism of inactivation involves the oxidation of the catalytic active site Fe(2+) to the catalytically inactive Fe(3+) oxidation state, superoxide production, and formation of two disulfide bonds between Cys-125 and Cys-128, and Cys-162 and Cys-165. Enzyme can be reactivated under reducing conditions. In terms of biological role, catalyzes the oxidative ring opening of 3-hydroxyanthranilate to 2-amino-3-carboxymuconate semialdehyde, which spontaneously cyclizes to quinolinate. The protein is 3-hydroxyanthranilate 3,4-dioxygenase of Cupriavidus metallidurans (strain ATCC 43123 / DSM 2839 / NBRC 102507 / CH34) (Ralstonia metallidurans).